Consider the following 202-residue polypeptide: Imidazoleglycerol-phosphate dehydratase (202 aa).

It belongs to the imidazoleglycerol-phosphate dehydratase family.

The protein localises to the cytoplasm. The catalysed reaction is D-erythro-1-(imidazol-4-yl)glycerol 3-phosphate = 3-(imidazol-4-yl)-2-oxopropyl phosphate + H2O. It participates in amino-acid biosynthesis; L-histidine biosynthesis; L-histidine from 5-phospho-alpha-D-ribose 1-diphosphate: step 6/9. The polypeptide is Imidazoleglycerol-phosphate dehydratase (Brucella abortus (strain S19)).